The primary structure comprises 272 residues: uncharacterized protein (272 aa).

The first 22 residues, 1–22, serve as a signal peptide directing secretion; it reads MEYIKKIALYMSVLLLIIFIGG. Residue C23 is the site of N-palmitoyl cysteine attachment. C23 is lipidated: S-diacylglycerol cysteine.

Belongs to the staphylococcal tandem lipoprotein family.

The protein resides in the cell membrane. This is an uncharacterized protein from Staphylococcus aureus (strain MRSA252).